The chain runs to 291 residues: Malectin (291 aa).

The first 30 residues, 1–30 (MLRPRGAEGTAVALLRLLLLLLLLGPKLRG), serve as a signal peptide directing secretion. Residues 31–268 (PGLGVVGAAG…TPNPYASDNS (238 aa)) lie on the Lumenal side of the membrane. Positions 81, 103, 130, 131, and 200 each coordinate a carbohydrate. The tract at residues 220–264 (LQPHPGLEKKEEEEEEEEYDEGSNLKRQTNKNRVQSGPRTPNPYA) is disordered. The span at 230–240 (EEEEEEEEYDE) shows a compositional bias: acidic residues. Positions 244-264 (LKRQTNKNRVQSGPRTPNPYA) are enriched in polar residues. A glycan (N-linked (GlcNAc...) asparagine) is linked at N267. Residues 269–289 (SLMFPILVAFGVFIPTLFCLC) form a helical membrane-spanning segment. Over 290-291 (RL) the chain is Cytoplasmic.

This sequence belongs to the malectin family. As to quaternary structure, interacts with the oligosaccharyltransferase (OST) complex.

Its subcellular location is the endoplasmic reticulum membrane. In terms of biological role, carbohydrate-binding protein with a strong ligand preference for Glc2-N-glycan. May play a role in the early steps of protein N-glycosylation. In Mus musculus (Mouse), this protein is Malectin.